A 986-amino-acid chain; its full sequence is Leucine-rich repeat receptor-like kinase protein HAR1 (986 aa).

Residues 1–25 (MRIRVSYLLVLCFTLIWFRWTVVYS) form the signal peptide. 21 LRR repeats span residues 71–97 (DQNL…IGLL), 98–121 (EKLE…LASL), 123–145 (SLKV…ITVG), 146–170 (MTEL…IVKL), 171–196 (EKLK…EFQS), 198–218 (EFLG…LAKL), 243–267 (MENL…LGNL), 268–291 (TKLH…LSSM), 293–314 (SLMS…SFSK), 316–339 (KNLT…IGDL), 340–363 (PNLE…LGGN), 365–387 (RFLY…LCKS), 388–411 (GRLK…IGEC), 412–435 (RSLT…VFQL), 437–458 (SVTI…VISG), 459–482 (ESLG…MKNL), 483–506 (RALQ…VFEI), 508–530 (MLTK…ITHR), 531–554 (ASLT…MKNL), 555–578 (MDLS…IRFM), and 579–603 (TSLT…QFLV). 5 N-linked (GlcNAc...) asparagine glycosylation sites follow: Asn80, Asn102, Asn109, Asn128, and Asn141. N-linked (GlcNAc...) asparagine glycosylation is found at Asn255, Asn266, and Asn279. N-linked (GlcNAc...) asparagine glycans are attached at residues Asn317 and Asn351. N-linked (GlcNAc...) asparagine glycosylation is found at Asn513 and Asn518. Residues Asn561 and Asn590 are each glycosylated (N-linked (GlcNAc...) asparagine). The chain crosses the membrane as a helical span at residues 645-665 (IVIGIALATAVLLVAVTVHVV). Residues 695 to 971 (LKEENIIGKG…TMREVVHMLT (277 aa)) form the Protein kinase domain. ATP-binding positions include 701-709 (IGKGGAGIV) and Lys723. Residue Asp820 is the Proton acceptor of the active site.

It belongs to the protein kinase superfamily. Ser/Thr protein kinase family. Expressed in roots, leaves, stems and flowers.

It localises to the cell membrane. It catalyses the reaction L-seryl-[protein] + ATP = O-phospho-L-seryl-[protein] + ADP + H(+). The enzyme catalyses L-threonyl-[protein] + ATP = O-phospho-L-threonyl-[protein] + ADP + H(+). LRR receptor kinase involved in the regulation of root and shoot growth, and root nodule organogenesis. Involved in long distance nodulation signaling events. Involved in the autoregulation of nodulation (AON), a long distance systemic signaling from root to shoot and back again, which allows legumes to limit the number of root nodules formed based on available nitrogen and previous rhizobial colonization. Acts from shoot to root to control AON. Involved in the regulation of root colonization by arbuscular mycorrhizal (AM) fungi. This Lotus japonicus (Lotus corniculatus var. japonicus) protein is Leucine-rich repeat receptor-like kinase protein HAR1.